A 132-amino-acid chain; its full sequence is Large ribosomal subunit protein uL14 (132 aa).

The protein belongs to the universal ribosomal protein uL14 family. In terms of assembly, part of the 50S ribosomal subunit. Forms a cluster with proteins L3 and L24e, part of which may contact the 16S rRNA in 2 intersubunit bridges.

Functionally, binds to 23S rRNA. Forms part of two intersubunit bridges in the 70S ribosome. The polypeptide is Large ribosomal subunit protein uL14 (Methanoregula boonei (strain DSM 21154 / JCM 14090 / 6A8)).